The chain runs to 395 residues: Galactokinase (395 aa).

39 to 42 serves as a coordination point for substrate; that stretch reads EHTD. Residues S73 and 127 to 133 each bind ATP; that span reads GAGLSSS. 2 residues coordinate Mg(2+): S133 and E165. The active-site Proton acceptor is D177. Residue Y227 coordinates substrate.

This sequence belongs to the GHMP kinase family. GalK subfamily.

The protein resides in the cytoplasm. It catalyses the reaction alpha-D-galactose + ATP = alpha-D-galactose 1-phosphate + ADP + H(+). It participates in carbohydrate metabolism; galactose metabolism. Its function is as follows. Catalyzes the transfer of the gamma-phosphate of ATP to D-galactose to form alpha-D-galactose-1-phosphate (Gal-1-P). The protein is Galactokinase of Halalkalibacterium halodurans (strain ATCC BAA-125 / DSM 18197 / FERM 7344 / JCM 9153 / C-125) (Bacillus halodurans).